Here is a 1222-residue protein sequence, read N- to C-terminus: Probable disease resistance protein At5g45510 (1222 aa).

49 to 56 (GEAGIGKT) is a binding site for ATP. Residues 122–183 (GERDEDEEEE…KLEAEKKLVD (62 aa)) adopt a coiled-coil conformation. 4 stretches are compositionally biased toward basic and acidic residues: residues 171–205 (AAEK…KEKT), 212–224 (GEDK…ERKP), 263–279 (RRQE…HAEG), and 286–322 (SGEK…HEKV). 2 disordered regions span residues 171–225 (AAEK…RKPY) and 263–327 (RRQE…PPTI). Thr293 is subject to Phosphothreonine. LRR repeat units lie at residues 654–676 (LLRV…KALT), 677–699 (KLNT…FFES), 702–724 (ELRS…SGLK), 725–747 (ELHC…QELV), 785–806 (KLQH…QDSA), 813–835 (SLTR…KPLS), 836–856 (GLQI…EVCF), 861–883 (ELKT…EDLS), 884–906 (SLNE…EKLE), 907–929 (NLEV…FEKM), and 931–951 (YLRV…PADT).

The protein belongs to the disease resistance NB-LRR family.

Its function is as follows. Probable disease resistance protein. This is Probable disease resistance protein At5g45510 from Arabidopsis thaliana (Mouse-ear cress).